We begin with the raw amino-acid sequence, 1167 residues long: ATP-dependent helicase/deoxyribonuclease subunit B (1167 aa).

In terms of domain architecture, UvrD-like helicase ATP-binding spans 1-359; that stretch reads MSLRFLLGRS…IRQTEAYRDL (359 aa). Residue 8 to 15 coordinates ATP; that stretch reads GRSGSGKT. In terms of domain architecture, UvrD-like helicase C-terminal spans 282–588; it reads VNRRHQDKAL…EFALVPPAID (307 aa). Residues C803, C1125, C1128, and C1134 each coordinate [4Fe-4S] cluster.

It belongs to the helicase family. AddB/RexB type 1 subfamily. In terms of assembly, heterodimer of AddA and AddB. Mg(2+) is required as a cofactor. The cofactor is [4Fe-4S] cluster.

The heterodimer acts as both an ATP-dependent DNA helicase and an ATP-dependent, dual-direction single-stranded exonuclease. Recognizes the chi site generating a DNA molecule suitable for the initiation of homologous recombination. The AddB subunit has 5' -&gt; 3' nuclease activity but not helicase activity. The sequence is that of ATP-dependent helicase/deoxyribonuclease subunit B from Geobacillus thermodenitrificans (strain NG80-2).